The sequence spans 340 residues: GTP-binding protein REM 2 (340 aa).

Positions 1–13 (MHTDLDTDMDMDT) are enriched in acidic residues. The tract at residues 1-107 (MHTDLDTDMD…SDSLGSGEAA (107 aa)) is disordered. A Phosphoserine modification is found at Ser-27. Residues 40–53 (LLKKSEKLLAELDR) show a composition bias toward basic and acidic residues. Low complexity predominate over residues 93-104 (SSSGSSDSLGSG). Residues 121-128 (GESGVGKS), 229-232 (NKSD), and 260-261 (AA) each bind GTP. The segment at 283–308 (RNHAGGQRPDPGSPEGPAPPARRESL) is disordered. Pro residues predominate over residues 293–302 (PGSPEGPAPP). Phosphoserine is present on Ser-295.

This sequence belongs to the small GTPase superfamily. RGK family.

The protein resides in the cell membrane. In terms of biological role, binds GTP saturably and exhibits a low intrinsic rate of GTP hydrolysis. This chain is GTP-binding protein REM 2 (REM2), found in Homo sapiens (Human).